A 1163-amino-acid polypeptide reads, in one-letter code: Reticulon-4 (1163 aa).

Met-1 is subject to N-acetylmethionine. Disordered stretches follow at residues 1–184 (MEDI…AASE) and 244–270 (SAVSSSEGTIEETLNEASKELPERATN). Over 1-989 (MEDIDQSSLV…LYWRDIKKTG (989 aa)) the chain is Cytoplasmic. A phosphoserine mark is found at Ser-7 and Ser-16. The span at 7–16 (SSLVSSSTDS) shows a compositional bias: low complexity. Positions 31 to 55 (EPEDEEDEEEEEDEEEDDEDLEELE) are enriched in acidic residues. Positions 62-79 (AAGLSAAAVPPAAAAPLL) are enriched in low complexity. Pro residues predominate over residues 87-101 (PPAPRGPLPAAPPAA). Phosphoserine is present on Ser-107. Pro residues predominate over residues 138 to 147 (ARPPPPPPAG). Ser-149, Ser-169, and Ser-171 each carry phosphoserine. Phosphoserine is present on residues Ser-329, Ser-333, and Ser-343. The residue at position 347 (Thr-347) is a Phosphothreonine. The span at 406–423 (DSLEQKSLGKDSEGRNED) shows a compositional bias: basic and acidic residues. 2 disordered regions span residues 406-437 (DSLEQKSLGKDSEGRNEDASFPSTPEPVKDSS) and 454-474 (TANTFPLLEDHTSENKTDEKK). Phosphoserine is present on Ser-425. Position 429 is a phosphothreonine (Thr-429). A compositionally biased stretch (basic and acidic residues) spans 461 to 474 (LEDHTSENKTDEKK). Phosphoserine occurs at positions 488, 689, 726, 766, and 830. Thr-832 is modified (phosphothreonine). A phosphoserine mark is found at Ser-855, Ser-922, and Ser-962. The 188-residue stretch at 976-1163 (VVDLLYWRDI…KIPGLKRKAD (188 aa)) folds into the Reticulon domain. A helical membrane pass occupies residues 990–1010 (VVFGASLFLLLSLTVFSIVSV). At 1011-1104 (TAYIALALLS…LMWVFTYVGA (94 aa)) the chain is on the lumenal side. Lys-1075 is modified (N6-acetyllysine). The chain crosses the membrane as a helical span at residues 1105-1125 (LFNGLTLLILALISLFSIPVI). Residues 1126-1163 (YERHQVQIDHYLGLANKSVKDAMAKIQAKIPGLKRKAD) lie on the Cytoplasmic side of the membrane.

In terms of assembly, binds to RTN4R. Interacts with ATL1. Interacts with TMEM170A. Interacts with RTN4IP1. As to quaternary structure, interacts in trans with CNTNAP1. Interacts with REEP5. Interacts with synaptic plasticity regulator PANTS; the interaction results in enhanced RTN4-mediated inhibition of AMPA receptor clustering. Interacts with GPR50. Homodimer. Interacts with BAD/Bcl-xl and BCL2. Interact with RTN3. Interacts with NGBR. Interacts with SPTLC1. Interacts with GRAMD4. Interacts with CDH5. Interacts with BACE1 and BACE2. Interacts with REEP5. Interacts with RETREG3. In terms of assembly, interacts with BACE1 and BACE2. Interacts with TMEM33. As to expression, isoforms A, B and C are present in optic nerve, spinal cord and cerebral cortex. Isoforms A and B are present in dorsal root ganglion, sciatic nerve and PC12 cells after longer exposure. Isoforms B and C are detected in kidney, cartilage, skin, lung and spleen. Isoform C is expressed at high level in skeletal muscle. In adult animals isoform A is expressed mainly in the nervous system.

It localises to the endoplasmic reticulum membrane. The protein localises to the cell membrane. It is found in the synapse. Its subcellular location is the cell junction. Its function is as follows. Required to induce the formation and stabilization of endoplasmic reticulum (ER) tubules. They regulate membrane morphogenesis in the ER by promoting tubular ER production. They influence nuclear envelope expansion, nuclear pore complex formation and proper localization of inner nuclear membrane proteins. However each isoform have specific functions mainly depending on their tissue expression specificities. Developmental neurite growth regulatory factor with a role as a negative regulator of axon-axon adhesion and growth, and as a facilitator of neurite branching. Regulates neurite fasciculation, branching and extension in the developing nervous system. Involved in down-regulation of growth, stabilization of wiring and restriction of plasticity in the adult CNS. Regulates the radial migration of cortical neurons via an RTN4R-LINGO1 containing receptor complex. Acts as a negative regulator of central nervous system angiogenesis. Inhibits spreading, migration and sprouting of primary brain microvascular endothelial cells (MVECs). Also induces the retraction of MVECs lamellipodia and filopodia in a ROCK pathway-dependent manner. In terms of biological role, mainly function in endothelial cells and vascular smooth muscle cells, is also involved in immune system regulation. Modulator of vascular remodeling, promotes the migration of endothelial cells but inhibits the migration of vascular smooth muscle cells. Regulates endothelial sphingolipid biosynthesis with direct effects on vascular function and blood pressure. Inhibits serine palmitoyltransferase, SPTLC1, the rate-limiting enzyme of the novo sphingolipid biosynthetic pathway, thereby controlling production of endothelial sphingosine-1-phosphate (S1P). Required to promote macrophage homing and functions such as cytokine/chemokine gene expression involved in angiogenesis, arteriogenesis and tissue repair. Mediates ICAM1 induced transendothelial migration of leukocytes such as monocytes and neutrophils and acute inflammation. Necessary for immune responses triggered by nucleic acid sensing TLRs, such as TLR9, is required for proper TLR9 location to endolysosomes. Also involved in immune response to LPS. Plays a role in liver regeneration through the modulation of hepatocytes proliferation. Reduces the anti-apoptotic activity of Bcl-xl and Bcl-2. This is likely consecutive to their change in subcellular location, from the mitochondria to the endoplasmic reticulum, after binding and sequestration. With isoform C, inhibits BACE1 activity and amyloid precursor protein processing. Functionally, regulates cardiomyocyte apoptosis upon hypoxic conditions. With isoform B, inhibits BACE1 activity and amyloid precursor protein processing. The polypeptide is Reticulon-4 (Rtn4) (Rattus norvegicus (Rat)).